The sequence spans 252 residues: Probable transcriptional regulatory protein Caur_1043 (252 aa).

Positions 1–14 (MSGHSKWHTIRRTK) are enriched in basic residues. The segment at 1 to 22 (MSGHSKWHTIRRTKGVNDQRRG) is disordered.

It belongs to the TACO1 family.

Its subcellular location is the cytoplasm. The chain is Probable transcriptional regulatory protein Caur_1043 from Chloroflexus aurantiacus (strain ATCC 29366 / DSM 635 / J-10-fl).